A 338-amino-acid chain; its full sequence is Ketol-acid reductoisomerase (NADP(+)) (338 aa).

Positions 1 to 181 (MKVFYDKDCD…GGGRTGIIET (181 aa)) constitute a KARI N-terminal Rossmann domain. Residues 24-27 (YGSQ), arginine 47, serine 50, threonine 52, and 82-85 (DEFQ) contribute to the NADP(+) site. Residue histidine 107 is part of the active site. Glycine 133 is an NADP(+) binding site. A KARI C-terminal knotted domain is found at 182 to 327 (TFKDETETDL…EQLRSMMPWI (146 aa)). The Mg(2+) site is built by aspartate 190, glutamate 194, glutamate 226, and glutamate 230. A substrate-binding site is contributed by serine 251.

This sequence belongs to the ketol-acid reductoisomerase family. It depends on Mg(2+) as a cofactor.

It carries out the reaction (2R)-2,3-dihydroxy-3-methylbutanoate + NADP(+) = (2S)-2-acetolactate + NADPH + H(+). The enzyme catalyses (2R,3R)-2,3-dihydroxy-3-methylpentanoate + NADP(+) = (S)-2-ethyl-2-hydroxy-3-oxobutanoate + NADPH + H(+). The protein operates within amino-acid biosynthesis; L-isoleucine biosynthesis; L-isoleucine from 2-oxobutanoate: step 2/4. Its pathway is amino-acid biosynthesis; L-valine biosynthesis; L-valine from pyruvate: step 2/4. Functionally, involved in the biosynthesis of branched-chain amino acids (BCAA). Catalyzes an alkyl-migration followed by a ketol-acid reduction of (S)-2-acetolactate (S2AL) to yield (R)-2,3-dihydroxy-isovalerate. In the isomerase reaction, S2AL is rearranged via a Mg-dependent methyl migration to produce 3-hydroxy-3-methyl-2-ketobutyrate (HMKB). In the reductase reaction, this 2-ketoacid undergoes a metal-dependent reduction by NADPH to yield (R)-2,3-dihydroxy-isovalerate. The sequence is that of Ketol-acid reductoisomerase (NADP(+)) from Pseudomonas fluorescens (strain ATCC BAA-477 / NRRL B-23932 / Pf-5).